The chain runs to 141 residues: Nucleoside triphosphatase NudI (141 aa).

Residues 1–141 (MRQRTIVCPL…RKTLRLKGLL (141 aa)) enclose the Nudix hydrolase domain. The short motif at 38 to 59 (GGVEPGERIEEALRREIREELG) is the Nudix box element.

The protein belongs to the Nudix hydrolase family. NudI subfamily. In terms of assembly, monomer. Mg(2+) serves as cofactor.

The catalysed reaction is a ribonucleoside 5'-triphosphate + H2O = a ribonucleoside 5'-phosphate + diphosphate + H(+). It carries out the reaction a 2'-deoxyribonucleoside 5'-triphosphate + H2O = a 2'-deoxyribonucleoside 5'-phosphate + diphosphate + H(+). It catalyses the reaction dUTP + H2O = dUMP + diphosphate + H(+). The enzyme catalyses dTTP + H2O = dTMP + diphosphate + H(+). The catalysed reaction is dCTP + H2O = dCMP + diphosphate + H(+). Catalyzes the hydrolysis of nucleoside triphosphates, with a preference for pyrimidine deoxynucleoside triphosphates (dUTP, dTTP and dCTP). This chain is Nucleoside triphosphatase NudI, found in Escherichia coli O17:K52:H18 (strain UMN026 / ExPEC).